The sequence spans 93 residues: Toxin RelE1 (93 aa).

This sequence belongs to the RelE toxin family.

Toxic component of a type II toxin-antitoxin (TA) system. Its toxic effect is neutralized by coexpression with cognate antitoxin RelB1 but no other ParD or RelB antitoxin. The protein is Toxin RelE1 (relE1) of Caulobacter vibrioides (strain ATCC 19089 / CIP 103742 / CB 15) (Caulobacter crescentus).